A 297-amino-acid polypeptide reads, in one-letter code: Mitochondrial ornithine transporter 1 (297 aa).

Solcar repeat units lie at residues 15-97, 102-205, and 212-292; these read GSPA…LKLT, DPTL…FKKN, and KPHF…FRET. 6 consecutive transmembrane segments (helical) span residues 18–38, 72–91, 107–127, 184–204, 215–235, and 264–285; these read ASTF…GYPL, GLTL…FTVY, YFIS…PFEY, HLTR…TFKK, FAYA…VFPV, and IYRG…NFTL.

This sequence belongs to the mitochondrial carrier (TC 2.A.29) family.

The protein localises to the mitochondrion inner membrane. In terms of biological role, required for arginine biosynthesis. Transports ornithine synthesized from glutamate in the mitochondrial matrix to the cytosol, where it is converted to arginine. This Schizosaccharomyces pombe (strain 972 / ATCC 24843) (Fission yeast) protein is Mitochondrial ornithine transporter 1.